A 369-amino-acid chain; its full sequence is Flagellar P-ring protein (369 aa).

A signal peptide spans 1–23 (MRSLLRWMGVLLLCGLCAAPAQA).

It belongs to the FlgI family. The basal body constitutes a major portion of the flagellar organelle and consists of four rings (L,P,S, and M) mounted on a central rod.

It is found in the periplasm. The protein localises to the bacterial flagellum basal body. Assembles around the rod to form the L-ring and probably protects the motor/basal body from shearing forces during rotation. This is Flagellar P-ring protein from Chromohalobacter salexigens (strain ATCC BAA-138 / DSM 3043 / CIP 106854 / NCIMB 13768 / 1H11).